Reading from the N-terminus, the 533-residue chain is NEDD8-activating enzyme E1 regulatory subunit (533 aa).

The tract at residues 330-343 (DMIADSDKFIKLQN) is interaction with uba3.

It belongs to the ubiquitin-activating E1 family. ULA1 subfamily. As to quaternary structure, heterodimer of uba3 and nae1. The complex binds nedd8 and ube2m.

It functions in the pathway protein modification; protein neddylation. Functionally, regulatory subunit of the dimeric uba3-nae1 E1 enzyme. E1 activates nedd8 by first adenylating its C-terminal glycine residue with ATP, thereafter linking this residue to the side chain of the catalytic cysteine, yielding a nedd8-uba3 thioester and free AMP. E1 finally transfers nedd8 to the catalytic cysteine of ube2m. The covalent attachment of nedd8 to target proteins is known as 'neddylation' and the process is involved in the regulation of cell growth, viability and development. This Xenopus laevis (African clawed frog) protein is NEDD8-activating enzyme E1 regulatory subunit (nae1).